A 384-amino-acid polypeptide reads, in one-letter code: 1-deoxy-D-xylulose 5-phosphate reductoisomerase (384 aa).

7 residues coordinate NADPH: Thr10, Gly11, Ser12, Ile13, Arg37, Asn38, and Asn124. Lys125 contacts 1-deoxy-D-xylulose 5-phosphate. Glu126 provides a ligand contact to NADPH. Position 150 (Asp150) interacts with Mn(2+). The 1-deoxy-D-xylulose 5-phosphate site is built by Ser151, Glu152, Ser176, and His199. Glu152 serves as a coordination point for Mn(2+). Gly205 is an NADPH binding site. Residues Ser212, Asn217, Lys218, and Glu221 each coordinate 1-deoxy-D-xylulose 5-phosphate. Residue Glu221 coordinates Mn(2+).

Belongs to the DXR family. It depends on Mg(2+) as a cofactor. The cofactor is Mn(2+).

It catalyses the reaction 2-C-methyl-D-erythritol 4-phosphate + NADP(+) = 1-deoxy-D-xylulose 5-phosphate + NADPH + H(+). Its pathway is isoprenoid biosynthesis; isopentenyl diphosphate biosynthesis via DXP pathway; isopentenyl diphosphate from 1-deoxy-D-xylulose 5-phosphate: step 1/6. Its function is as follows. Catalyzes the NADPH-dependent rearrangement and reduction of 1-deoxy-D-xylulose-5-phosphate (DXP) to 2-C-methyl-D-erythritol 4-phosphate (MEP). This chain is 1-deoxy-D-xylulose 5-phosphate reductoisomerase, found in Clostridium perfringens (strain ATCC 13124 / DSM 756 / JCM 1290 / NCIMB 6125 / NCTC 8237 / Type A).